A 345-amino-acid chain; its full sequence is Protein sdf-9 (345 aa).

In terms of domain architecture, Tyrosine-protein phosphatase spans 33–284 (NRNRVVKIVP…SFIYEAVLDY (252 aa)).

It belongs to the protein-tyrosine phosphatase family. Expressed in the 2 embryonic head hypodermal cells XXXL/R.

The protein resides in the cytoplasm. The protein localises to the cell membrane. Functionally, together with eak-4 and phosphatase eak-6, negatively regulates dauer larva formation downstream of insulin-like receptor daf-2 and in parallel of age-1, pdk-1 and akt-1. The chain is Protein sdf-9 from Caenorhabditis elegans.